The following is a 51-amino-acid chain: Large ribosomal subunit protein bL33 (51 aa).

A disordered region spans residues 1-20 (MRDKIRLNSSAGTGHFYTTD).

It belongs to the bacterial ribosomal protein bL33 family.

This chain is Large ribosomal subunit protein bL33, found in Psychromonas ingrahamii (strain DSM 17664 / CCUG 51855 / 37).